A 238-amino-acid polypeptide reads, in one-letter code: Probable transglycosylase SceD 3 (238 aa).

Residues 1 to 27 (MKKTVVASTLAVGLGVTGFAAGNSADA) form the signal peptide. Positions 82-161 (YGQGSTNAPA…SEASEGSSVN (80 aa)) are disordered. Residues 89-156 (APAQETAEQP…NESSSSEASE (68 aa)) show a composition bias toward low complexity.

The protein belongs to the transglycosylase family. SceD subfamily.

It localises to the secreted. Its function is as follows. Is able to cleave peptidoglycan and affects clumping and separation of bacterial cells. This Staphylococcus saprophyticus subsp. saprophyticus (strain ATCC 15305 / DSM 20229 / NCIMB 8711 / NCTC 7292 / S-41) protein is Probable transglycosylase SceD 3 (sceD3).